Reading from the N-terminus, the 534-residue chain is NAD(P)H-quinone oxidoreductase chain 4 1 (534 aa).

A run of 14 helical transmembrane segments spans residues 6–26 (IPWLTTAIAFPLLAALVIPLI), 34–54 (IRWYTLGVALTDFALLVTAFW), 87–107 (LSMPLIILATLITTLATLAAW), 113–133 (PKLFAGLILVMLSAQIGVFAV), 136–156 (LLLFFIMWELELVPVYLLISI), 169–189 (FILYTALGSVFILASTLALAF), 209–229 (ALELLAYAGFLIGFGVKLPIF), 243–263 (SAPVSMILAGVLLKMGGYGLI), 277–297 (FAPLLIVLGIVNIVYGALTAF), 311–331 (ISHMGFVLVGIASFTDLGMNG), 332–352 (AVLQMLSHGFIAAALFFLSGV), 376–396 (FAMFTAAAMASLALPGMSGFV), 418–438 (IAIFLTAVGVILTPIYLLSML), and 464–484 (IFVAVCLLAPIIAIGLYPKLA).

The protein belongs to the complex I subunit 4 family.

The protein localises to the cellular thylakoid membrane. It carries out the reaction a plastoquinone + NADH + (n+1) H(+)(in) = a plastoquinol + NAD(+) + n H(+)(out). It catalyses the reaction a plastoquinone + NADPH + (n+1) H(+)(in) = a plastoquinol + NADP(+) + n H(+)(out). In terms of biological role, NDH-1 shuttles electrons from NAD(P)H, via FMN and iron-sulfur (Fe-S) centers, to quinones in the respiratory chain. The immediate electron acceptor for the enzyme in this species is believed to be plastoquinone. Couples the redox reaction to proton translocation (for every two electrons transferred, four hydrogen ions are translocated across the cytoplasmic membrane), and thus conserves the redox energy in a proton gradient. The polypeptide is NAD(P)H-quinone oxidoreductase chain 4 1 (Picosynechococcus sp. (strain ATCC 27264 / PCC 7002 / PR-6) (Agmenellum quadruplicatum)).